The chain runs to 392 residues: MSAEKSKIEHAPWAWGLPVTPPRAAAACAASPWTPRVPADIAQAGGRAGTPRRRAPARTLGHVIFAVPELVEQLVRFVAAGSEQAGAPRALHHCLLVNRLWHAVTVAVLRERLYFADARRLRQFAAAAHRGRLAPELVVLHKLTRLEQRDLDRALQHVSPERLRRLELYVCPRVLPPAGYLGRAGGLRRLALPGNKLVSDDFLIEACVHLPRLQVLDLRACDRVSDAGVVAVATNCPRLHTVNLGRHRNGHLITSVAVVALARHVQLETLGVAGCDVSDAGLWELAAVCGPSLARLSLNNCRYLTNRSVPALLELNAFPNLSVLELRNIPHLTDVRAVVRYRQWKRACGLPVLVEGCDRLTQLFRCEERKLCKENCASPVRDLAAWLRSEED.

This sequence belongs to the AMN1 family.

The protein resides in the cytoplasm. It is found in the nucleus. In terms of biological role, negative regulator of the mitotic exit network (MEN), required for multiple cell cycle checkpoints. Required for daughter cell separation and chromosome stability. Involved in copper sensitivity. This chain is Antagonist of mitotic exit network protein 1 (AMN1), found in Eremothecium gossypii (strain ATCC 10895 / CBS 109.51 / FGSC 9923 / NRRL Y-1056) (Yeast).